Consider the following 85-residue polypeptide: Putative defensin-like protein 79 (85 aa).

Residues 1–31 (MKSEKSADAYGTYFLLISTIFLLFIARQASS) form the signal peptide. Cystine bridges form between Cys-37–Cys-69, Cys-44–Cys-60, Cys-47–Cys-67, and Cys-51–Cys-68.

The protein belongs to the DEFL family.

The protein resides in the secreted. The protein is Putative defensin-like protein 79 of Arabidopsis thaliana (Mouse-ear cress).